We begin with the raw amino-acid sequence, 360 residues long: MPKFKQRRRKLKAKAERLFKKKEASHFQSKLITPPPPPPSPERVGISSIDISQSRSWLTSSWNFNFPNIRDAIKLWTNRVWSIYSWCQNCITQSLEVLKDTIFPSRICHRELYSVKQQFCILESKLCKLQEALKTISESSSCPSCGQTCHMSGKLTNVPACVLITPGDSKAVLPPTLPQPASHFPPPPPPPPLPPPPPPLAPVLLRKPSLAKALQAGPLKKDGPMQITVKDLLTVKLKKTQSLDEKRKLIPSPKARNPLVTVSDLQHVTLKPNSKVLSTRVTNVLITPGKSQMDLRKLLRKVDVERSPGGTPLTNKENMETGTGLTPVMTQALRRKFQLAHPRSPTPTLPLSTSSFDEQN.

Disordered regions lie at residues 20-43 (KKKE…SPER) and 174-201 (PPTL…PPLA). Thr-33 is modified (phosphothreonine). Ser-40 bears the Phosphoserine mark. Residues 175-201 (PTLPQPASHFPPPPPPPPLPPPPPPLA) show a composition bias toward pro residues. The Phosphodegron signature appears at 285–291 (LITPGKS). Thr-287 is modified (phosphothreonine). At Ser-291 the chain carries Phosphoserine. Positions 296–304 (RKLLRKVDV) match the D-box motif. The KEN box signature appears at 316 to 318 (KEN). Positions 325–330 (LTPVMT) match the Phosphodegron motif. Positions 340–360 (AHPRSPTPTLPLSTSSFDEQN) are disordered. The residue at position 344 (Ser-344) is a Phosphoserine. A phosphothreonine mark is found at Thr-346 and Thr-348. The span at 349 to 360 (LPLSTSSFDEQN) shows a compositional bias: low complexity.

Ubiquitinated. Rapidly degraded by the proteasome; degradation may involve FBXW7-specific phosphorylated phosphodegron motifs. As to expression, ubiquitously expressed.

The protein localises to the cytoplasm. Its subcellular location is the nucleus. Functionally, plays a critical role in cell cycle progression. This chain is Proline-rich protein 11 (PRR11), found in Homo sapiens (Human).